Reading from the N-terminus, the 92-residue chain is Large ribosomal subunit protein bL25 (92 aa).

It belongs to the bacterial ribosomal protein bL25 family. As to quaternary structure, part of the 50S ribosomal subunit; part of the 5S rRNA/L5/L18/L25 subcomplex. Contacts the 5S rRNA. Binds to the 5S rRNA independently of L5 and L18.

This is one of the proteins that binds to the 5S RNA in the ribosome where it forms part of the central protuberance. In Vibrio vulnificus (strain CMCP6), this protein is Large ribosomal subunit protein bL25.